Consider the following 492-residue polypeptide: Glutamate--tRNA ligase (492 aa).

Positions 13-23 (PSPTGTPHVGM) match the 'HIGH' region motif. Residues 257–261 (KLSKR) carry the 'KMSKS' region motif. Lysine 260 is an ATP binding site.

Belongs to the class-I aminoacyl-tRNA synthetase family. Glutamate--tRNA ligase type 1 subfamily. In terms of assembly, monomer.

The protein localises to the cytoplasm. The enzyme catalyses tRNA(Glu) + L-glutamate + ATP = L-glutamyl-tRNA(Glu) + AMP + diphosphate. Catalyzes the attachment of glutamate to tRNA(Glu) in a two-step reaction: glutamate is first activated by ATP to form Glu-AMP and then transferred to the acceptor end of tRNA(Glu). The chain is Glutamate--tRNA ligase from Mycolicibacterium paratuberculosis (strain ATCC BAA-968 / K-10) (Mycobacterium paratuberculosis).